A 196-amino-acid polypeptide reads, in one-letter code: Peptidyl-tRNA hydrolase (196 aa).

Tyr18 contributes to the tRNA binding site. His23 functions as the Proton acceptor in the catalytic mechanism. Phe69, Asn71, and Asn117 together coordinate tRNA.

The protein belongs to the PTH family. Monomer.

The protein resides in the cytoplasm. It carries out the reaction an N-acyl-L-alpha-aminoacyl-tRNA + H2O = an N-acyl-L-amino acid + a tRNA + H(+). Functionally, hydrolyzes ribosome-free peptidyl-tRNAs (with 1 or more amino acids incorporated), which drop off the ribosome during protein synthesis, or as a result of ribosome stalling. In terms of biological role, catalyzes the release of premature peptidyl moieties from peptidyl-tRNA molecules trapped in stalled 50S ribosomal subunits, and thus maintains levels of free tRNAs and 50S ribosomes. The sequence is that of Peptidyl-tRNA hydrolase from Vibrio parahaemolyticus serotype O3:K6 (strain RIMD 2210633).